Reading from the N-terminus, the 130-residue chain is Phosphoribosyl-AMP cyclohydrolase (130 aa).

Mg(2+) is bound at residue Asp74. Cys75 serves as a coordination point for Zn(2+). The Mg(2+) site is built by Asp76 and Asp78. Cys91 and Cys98 together coordinate Zn(2+).

This sequence belongs to the PRA-CH family. As to quaternary structure, homodimer. The cofactor is Mg(2+). Requires Zn(2+) as cofactor.

Its subcellular location is the cytoplasm. It carries out the reaction 1-(5-phospho-beta-D-ribosyl)-5'-AMP + H2O = 1-(5-phospho-beta-D-ribosyl)-5-[(5-phospho-beta-D-ribosylamino)methylideneamino]imidazole-4-carboxamide. The protein operates within amino-acid biosynthesis; L-histidine biosynthesis; L-histidine from 5-phospho-alpha-D-ribose 1-diphosphate: step 3/9. Functionally, catalyzes the hydrolysis of the adenine ring of phosphoribosyl-AMP. This is Phosphoribosyl-AMP cyclohydrolase from Bradyrhizobium sp. (strain ORS 278).